The sequence spans 136 residues: Large ribosomal subunit protein eL27 (136 aa).

The 36-residue stretch at 5-40 (MKPGKVVLVLAGRYSGRKAVIVKNIDDGTSDRPYSH) folds into the KOW domain. 2 positions are modified to N6-acetyllysine: lysine 27 and lysine 93.

It belongs to the eukaryotic ribosomal protein eL27 family. Component of the large ribosomal subunit. Interacts with RRP1B. Component of the large ribosomal subunit. Interacts with RRP1B. Interacts with DHX33.

The protein localises to the cytoplasm. The protein resides in the cytosol. Its subcellular location is the rough endoplasmic reticulum. Its function is as follows. Component of the large ribosomal subunit. Required for proper rRNA processing and maturation of 28S and 5.8S rRNAs. The polypeptide is Large ribosomal subunit protein eL27 (RPL27) (Canis lupus familiaris (Dog)).